The sequence spans 197 residues: Imidazoleglycerol-phosphate dehydratase (197 aa).

This sequence belongs to the imidazoleglycerol-phosphate dehydratase family.

The protein resides in the cytoplasm. The catalysed reaction is D-erythro-1-(imidazol-4-yl)glycerol 3-phosphate = 3-(imidazol-4-yl)-2-oxopropyl phosphate + H2O. It functions in the pathway amino-acid biosynthesis; L-histidine biosynthesis; L-histidine from 5-phospho-alpha-D-ribose 1-diphosphate: step 6/9. The chain is Imidazoleglycerol-phosphate dehydratase from Pseudomonas aeruginosa (strain LESB58).